A 424-amino-acid chain; its full sequence is Histidine--tRNA ligase (424 aa).

The protein belongs to the class-II aminoacyl-tRNA synthetase family. As to quaternary structure, homodimer.

Its subcellular location is the cytoplasm. It carries out the reaction tRNA(His) + L-histidine + ATP = L-histidyl-tRNA(His) + AMP + diphosphate + H(+). The sequence is that of Histidine--tRNA ligase from Shigella dysenteriae serotype 1 (strain Sd197).